A 123-amino-acid polypeptide reads, in one-letter code: Small ribosomal subunit protein uS12cz/uS12cy (123 aa).

The protein belongs to the universal ribosomal protein uS12 family. Part of the 30S ribosomal subunit.

The protein resides in the plastid. It is found in the chloroplast. Functionally, with S4 and S5 plays an important role in translational accuracy. Located at the interface of the 30S and 50S subunits. In Platanus occidentalis (Sycamore), this protein is Small ribosomal subunit protein uS12cz/uS12cy (rps12-A).